Consider the following 761-residue polypeptide: Xaa-Pro dipeptidyl-peptidase (761 aa).

Catalysis depends on charge relay system residues serine 347, aspartate 467, and histidine 497.

The protein belongs to the peptidase S15 family. In terms of assembly, homodimer.

Its subcellular location is the cytoplasm. It carries out the reaction Hydrolyzes Xaa-Pro-|- bonds to release unblocked, N-terminal dipeptides from substrates including Ala-Pro-|-p-nitroanilide and (sequentially) Tyr-Pro-|-Phe-Pro-|-Gly-Pro-|-Ile.. Its function is as follows. Removes N-terminal dipeptides sequentially from polypeptides having unsubstituted N-termini provided that the penultimate residue is proline. This Streptococcus agalactiae serotype Ia (strain ATCC 27591 / A909 / CDC SS700) protein is Xaa-Pro dipeptidyl-peptidase.